The chain runs to 542 residues: Putative CTP synthase (542 aa).

The amidoligase domain stretch occupies residues 1–277 (MEIDLMKHIQ…HKTILDFFSL (277 aa)). S23 is a binding site for CTP. S23 contributes to the UTP binding site. ATP contacts are provided by residues 24–29 (SLGKGV) and D81. Mg(2+) contacts are provided by D81 and E151. Residues 158–160 (DIE), 198–203 (KTKPTQ), and K234 each bind CTP. UTP contacts are provided by residues 198 to 203 (KTKPTQ) and K234. A Glutamine amidotransferase type-1 domain is found at 310 to 542 (YVELPDAYKS…LKMSLKIKES (233 aa)). E517 is an active-site residue.

This sequence belongs to the CTP synthase family. As to quaternary structure, homotetramer.

The catalysed reaction is UTP + L-glutamine + ATP + H2O = CTP + L-glutamate + ADP + phosphate + 2 H(+). It carries out the reaction L-glutamine + H2O = L-glutamate + NH4(+). The enzyme catalyses UTP + NH4(+) + ATP = CTP + ADP + phosphate + 2 H(+). Its pathway is pyrimidine metabolism; CTP biosynthesis via de novo pathway; CTP from UDP: step 2/2. Its activity is regulated as follows. Allosterically activated by GTP, when glutamine is the substrate; GTP has no effect on the reaction when ammonia is the substrate. The allosteric effector GTP functions by stabilizing the protein conformation that binds the tetrahedral intermediate(s) formed during glutamine hydrolysis. Inhibited by the product CTP, via allosteric rather than competitive inhibition. Catalyzes the ATP-dependent amination of UTP to CTP with either L-glutamine or ammonia as the source of nitrogen. Regulates intracellular CTP levels through interactions with the four ribonucleotide triphosphates. This Ureaplasma parvum serovar 3 (strain ATCC 700970) protein is Putative CTP synthase.